We begin with the raw amino-acid sequence, 864 residues long: Coiled-coil and C2 domain-containing protein 1B (864 aa).

Positions 82-154 are disordered; that stretch reads QDCMTDMTGE…VNSSVAEIQH (73 aa). 2 stretches are compositionally biased toward acidic residues: residues 89–104 and 111–129; these read TGED…EELL and VGEE…EESE. The stretch at 91–118 forms a coiled coil; that stretch reads EDDDDDLEEDEELLAELQDVVGEEEEVE. Residues 142 to 154 are compositionally biased toward polar residues; sequence EQQVNSSVAEIQH. Positions 162–209 form a coiled coil; the sequence is GMLQVLEERIGNYKEAISNAKLSNESAKARRYERGLKTLESMLSAARQ. Residues 218-249 are disordered; it reads IPPPVACGKPAVSPTTDVPTTDTSKQGLGDLN. Residues 229–241 show a composition bias toward low complexity; it reads VSPTTDVPTTDTS. A coiled-coil region spans residues 385–412; sequence VGSLLQALQQRMEKYKSAAQQAKSSGDD. Disordered stretches follow at residues 441-463 and 478-502; these read AELP…EEGS and AGED…PTQL. Positions 444 to 453 are enriched in pro residues; it reads PVPPGFPPLP. Coiled coils occupy residues 464–488 and 535–564; these read VEKA…DEDE and PAVQ…KNDL. The C2 domain occupies 685–820; sequence HFEDKTLKIV…ETQCEIREIV (136 aa).

This sequence belongs to the CC2D1 family.

The protein is Coiled-coil and C2 domain-containing protein 1B (cc2d1b) of Xenopus laevis (African clawed frog).